The following is a 490-amino-acid chain: Capsid protein (490 aa).

The segment at 79–143 (GETSEEESDS…TQPKTIPGQK (65 aa)) is disordered. The span at 81-94 (TSEEESDSGEEPEF) shows a compositional bias: acidic residues. A compositionally biased stretch (basic and acidic residues) spans 95–111 (EQVRMDRTGGTEIPKEE). A Nuclear localization signal motif is present at residues 122 to 125 (RKRK). The CCHC-type zinc finger occupies 411–428 (CRCWICNIEGHYANECPN). A disordered region spans residues 464–490 (YKEEEEETSTEEDDGSSTSEDSDSESD). Positions 465–490 (KEEEEETSTEEDDGSSTSEDSDSESD) are enriched in acidic residues.

This sequence belongs to the caulimoviridae capsid protein family. Interacts (via nuclear localization signal) with host importin alpha.

It localises to the virion. The protein localises to the host nucleus. In terms of biological role, self assembles to form an icosahedral capsid, about 50 nm in diameter, nm, composed of 420 subunits of the viral capsid protein. The capsid encapsulates the genomic dsDNA. Following virus entry into host cell, provides nuclear import of the viral genome. Virus particles do not enter the nucleus, but dock at the nuclear membrane through the interaction with host importins. The protein is Capsid protein of Arabidopsis thaliana (Mouse-ear cress).